A 20-amino-acid chain; its full sequence is ATP synthase subunit beta, chloroplastic (20 aa).

Over residues 1–10 (METTNESLGY) the composition is skewed to polar residues. The segment at 1 to 20 (METTNESLGYTDQIIGPVLD) is disordered.

It belongs to the ATPase alpha/beta chains family. As to quaternary structure, F-type ATPases have 2 components, CF(1) - the catalytic core - and CF(0) - the membrane proton channel. CF(1) has five subunits: alpha(3), beta(3), gamma(1), delta(1), epsilon(1). CF(0) has four main subunits: a(1), b(1), b'(1) and c(9-12).

The protein localises to the plastid. The protein resides in the chloroplast thylakoid membrane. The catalysed reaction is ATP + H2O + 4 H(+)(in) = ADP + phosphate + 5 H(+)(out). Produces ATP from ADP in the presence of a proton gradient across the membrane. The catalytic sites are hosted primarily by the beta subunits. This Chattonella marina var. antiqua (Red tide flagellate) protein is ATP synthase subunit beta, chloroplastic.